We begin with the raw amino-acid sequence, 96 residues long: Integration host factor subunit beta (96 aa).

The tract at residues R59–P78 is disordered.

This sequence belongs to the bacterial histone-like protein family. As to quaternary structure, heterodimer of an alpha and a beta chain.

This protein is one of the two subunits of integration host factor, a specific DNA-binding protein that functions in genetic recombination as well as in transcriptional and translational control. The sequence is that of Integration host factor subunit beta from Thioalkalivibrio sulfidiphilus (strain HL-EbGR7).